We begin with the raw amino-acid sequence, 325 residues long: Sel1-repeat-containing protein YbeQ (325 aa).

Sel1-like repeat units lie at residues 26-61 (EAQY…EQGH), 63-97 (EAQY…LQGH), 103-130 (ALGW…AESG), 132-167 (SYAQ…LQGH), 168-203 (SDAQ…QQGN), 205-239 (HAQF…AQGS), 242-275 (AYVN…ECND), and 280-305 (YNLA…LYRK).

This sequence to E.coli YbeT.

In Escherichia coli (strain K12), this protein is Sel1-repeat-containing protein YbeQ (ybeQ).